The sequence spans 429 residues: uncharacterized protein (429 aa).

The next 11 membrane-spanning stretches (helical) occupy residues 27-47 (PFFFLFCLFIPFDNTSLQSIG), 48-68 (GIMTASPSALILLPGLFVSIL), 78-98 (ILLCFFGVLLISFLYYFYWVF), 106-126 (IFILDRGSRYFLLYVFYFLAL), 142-162 (ALIIIVVIFSVLLNYLDPAII), 198-218 (LLLAVLLNWSTFFLVTVTIVI), 219-239 (AILTTSKGAALSFLICICFYF), 249-269 (VLLSLCSIVISYIIFKYYFLD), 288-308 (FIVGLKIFLFNPLGVGFFGYL), 351-371 (LILDLLIIYGVFFLIPFIYFI), and 399-419 (FFISHLGSYFTPFCIAFLIIL).

It is found in the cell membrane. May function as a transporter. This is an uncharacterized protein from Klebsiella pneumoniae.